Reading from the N-terminus, the 570-residue chain is Sulfite reductase [NADPH] hemoprotein beta-component (570 aa).

Positions 434, 440, 479, and 483 each coordinate [4Fe-4S] cluster. Cys483 serves as a coordination point for siroheme.

It belongs to the nitrite and sulfite reductase 4Fe-4S domain family. Alpha(8)-beta(8). The alpha component is a flavoprotein, the beta component is a hemoprotein. Siroheme is required as a cofactor. Requires [4Fe-4S] cluster as cofactor.

The enzyme catalyses hydrogen sulfide + 3 NADP(+) + 3 H2O = sulfite + 3 NADPH + 4 H(+). The protein operates within sulfur metabolism; hydrogen sulfide biosynthesis; hydrogen sulfide from sulfite (NADPH route): step 1/1. Its function is as follows. Component of the sulfite reductase complex that catalyzes the 6-electron reduction of sulfite to sulfide. This is one of several activities required for the biosynthesis of L-cysteine from sulfate. The polypeptide is Sulfite reductase [NADPH] hemoprotein beta-component (Escherichia coli O17:K52:H18 (strain UMN026 / ExPEC)).